Reading from the N-terminus, the 243-residue chain is DNA repair protein RecO (243 aa).

It belongs to the RecO family.

Its function is as follows. Involved in DNA repair and RecF pathway recombination. In Geobacter sulfurreducens (strain ATCC 51573 / DSM 12127 / PCA), this protein is DNA repair protein RecO.